A 581-amino-acid chain; its full sequence is Arginine--tRNA ligase (581 aa).

The 'HIGH' region motif lies at 131–141; sequence ANPTGPLHVGH.

The protein belongs to the class-I aminoacyl-tRNA synthetase family. In terms of assembly, monomer.

Its subcellular location is the cytoplasm. It carries out the reaction tRNA(Arg) + L-arginine + ATP = L-arginyl-tRNA(Arg) + AMP + diphosphate. This chain is Arginine--tRNA ligase, found in Ruegeria pomeroyi (strain ATCC 700808 / DSM 15171 / DSS-3) (Silicibacter pomeroyi).